The chain runs to 287 residues: Lactamase-like protein nscB (287 aa).

Residues His-62, His-64, Asp-66, and His-67 each coordinate Zn(2+). Residue Asp-66 is the Proton donor/acceptor of the active site.

This sequence belongs to the metallo-beta-lactamase superfamily. The cofactor is Zn(2+).

The protein operates within secondary metabolite biosynthesis. Lactamase-like protein; part of the gene cluster that mediates the biosynthesis of neosartoricin B, a prenylated anthracenone that probably exhibits T-cell antiproliferative activity, suggestive of a physiological role as an immunosuppressive agent. The non-reducing polyketide synthase nscA probably synthesizes and cyclizes the decaketide backbone. The hydrolase nscB then mediates the product release through hydrolysis followed by spontaneous decarboxylation. The prenyltransferase nscD catalyzes the addition of the dimethylallyl group to the aromatic C5. The FAD-dependent monooxygenase nscC is then responsible for the stereospecific hydroxylation at C2. Neosartoricin B can be converted into two additional compounds neosartoricins C and D. Neosartoricin C is a spirocyclic compound that is cyclized through the attack of C3 hydroxyl on C14, followed by dehydration. On the other hand, neosartoricin D is a further cyclized compound in which attack of C2 on C14 in neosartoricin C results in the formation of the acetal-containing dioxabicyclo-octanone ring. Both of these compounds are novel and possibly represent related metabolites of the gene cluster. In Trichophyton verrucosum (strain HKI 0517), this protein is Lactamase-like protein nscB.